We begin with the raw amino-acid sequence, 124 residues long: WAP four-disulfide core domain protein 2 (124 aa).

The N-terminal stretch at 1-27 is a signal peptide; that stretch reads MPACRPGPLAGALLLGLLLLGLPRVPG. WAP domains follow at residues 29 to 73 and 74 to 123; these read EVEK…CHLP and NEKE…VTPI. 8 disulfide bridges follow: C36-C62, C45-C66, C49-C61, C55-C70, C80-C110, C93-C114, C97-C109, and C103-C119. N-linked (GlcNAc...) asparagine glycosylation occurs at N44.

Homotrimer; disulfide-linked. As to expression, epididymis. Highest levels are found in the caput and proximal cauda regions. Lower levels in the distal cauda. Not detected in the efferent ducts.

It is found in the secreted. In terms of biological role, broad range protease inhibitor. Possible function in sperm maturation. The chain is WAP four-disulfide core domain protein 2 (WFDC2) from Canis lupus familiaris (Dog).